The chain runs to 1098 residues: Unconventional myosin-If (1098 aa).

The region spanning 17-690 (SGVDDMVLLP…SLFLLEEVRE (674 aa)) is the Myosin motor domain. 110-117 (GESGAGKT) is a binding site for ATP. Positions 579–589 (PHYIRCIKPNE) are actin-binding. Positions 693–722 (FDGFARTIQKAWRRHVAVRKYEEMREEASN) constitute an IQ domain. In terms of domain architecture, TH1 spans 728 to 917 (KERRRNSINR…GRTLTVSVGD (190 aa)). Disordered stretches follow at residues 913–1009 (VSVG…EFLN) and 1021–1044 (KRSVGQRPVPGVGRPKPQPRTHGP). Residues 924–937 (KPTRKGMAKGKPRR) show a composition bias toward basic residues. Phosphoserine is present on S1023. An SH3 domain is found at 1041-1098 (THGPRCRALYQYVGQDVDELSFNVNEVIEILMEDPSGWWKGRLHGQEGLFPGNYVEKI).

The protein belongs to the TRAFAC class myosin-kinesin ATPase superfamily. Myosin family.

Its function is as follows. Myosins are actin-based motor molecules with ATPase activity. Unconventional myosins serve in intracellular movements. Their highly divergent tails are presumed to bind to membranous compartments, which would be moved relative to actin filaments. This is Unconventional myosin-If (MYO1F) from Homo sapiens (Human).